We begin with the raw amino-acid sequence, 167 residues long: Ribosome maturation factor RimM (167 aa).

One can recognise a PRC barrel domain in the interval 94 to 166; that stretch reads TGRAYLHELI…YMVVPRFDEF (73 aa).

It belongs to the RimM family. In terms of assembly, binds ribosomal protein uS19.

The protein localises to the cytoplasm. In terms of biological role, an accessory protein needed during the final step in the assembly of 30S ribosomal subunit, possibly for assembly of the head region. Essential for efficient processing of 16S rRNA. May be needed both before and after RbfA during the maturation of 16S rRNA. It has affinity for free ribosomal 30S subunits but not for 70S ribosomes. The protein is Ribosome maturation factor RimM of Chlorobium phaeobacteroides (strain DSM 266 / SMG 266 / 2430).